The primary structure comprises 413 residues: NAD(P)H oxidoreductase RTN4IP1, mitochondrial (413 aa).

The N-terminal 23 residues, 1 to 23 (MTAAGFNSILCLRQLVRLNRRQY), are a transit peptide targeting the mitochondrion. Residues 27–52 (AKSVLSGSQTNDQATPPPTSKSADKM) are disordered. Residues 31-40 (LSGSQTNDQA) are compositionally biased toward polar residues. An Enoyl reductase (ER) domain is found at 61 to 405 (GDIDELQLSE…SGHLRGKIVV (345 aa)). NADPH is bound by residues S228, G230, V231, S251, Y269, G353, F355, H398, and R400.

This sequence belongs to the zinc-containing alcohol dehydrogenase family. Quinone oxidoreductase subfamily.

It is found in the mitochondrion matrix. The catalysed reaction is a quinone + NADH + H(+) = a quinol + NAD(+). The enzyme catalyses a quinone + NADPH + H(+) = a quinol + NADP(+). The protein operates within cofactor biosynthesis; ubiquinone biosynthesis. Its function is as follows. NAD(P)H oxidoreductase. Involved in the ubiquinone biosynthetic pathway. This chain is NAD(P)H oxidoreductase RTN4IP1, mitochondrial, found in Drosophila melanogaster (Fruit fly).